The following is a 598-amino-acid chain: Urease subunit alpha (598 aa).

Residues histidine 141, histidine 143, and lysine 223 each contribute to the Ni(2+) site. Position 223 is an N6-carboxylysine (lysine 223). Substrate is bound at residue histidine 225. Histidine 252 and histidine 278 together coordinate Ni(2+). Histidine 326 serves as the catalytic Proton donor. Aspartate 366 serves as a coordination point for Ni(2+).

Belongs to the metallo-dependent hydrolases superfamily. Urease alpha subunit family. Heterotrimer of UreA (gamma), UreB (beta) and UreC (alpha) subunits. Three heterotrimers associate to form the active enzyme. Ni cation is required as a cofactor. Post-translationally, carboxylation allows a single lysine to coordinate two nickel ions.

It localises to the cytoplasm. The enzyme catalyses urea + 2 H2O + H(+) = hydrogencarbonate + 2 NH4(+). The protein operates within nitrogen metabolism; urea degradation; CO(2) and NH(3) from urea (urease route): step 1/1. The polypeptide is Urease subunit alpha (Ureaplasma parvum serovar 3 (strain ATCC 27815 / 27 / NCTC 11736)).